The primary structure comprises 296 residues: Light-independent protochlorophyllide reductase iron-sulfur ATP-binding protein (296 aa).

Over residues 1–11 the composition is skewed to basic and acidic residues; it reads MTSTITRKEDG. Positions 1–20 are disordered; that stretch reads MTSTITRKEDGEGSVQVKQD. Residues 39–44 and K68 contribute to the ATP site; that span reads GIGKST. Residue S43 coordinates Mg(2+). Positions 124 and 158 each coordinate [4Fe-4S] cluster. Residue 209 to 210 coordinates ATP; that stretch reads NR.

The protein belongs to the NifH/BchL/ChlL family. In terms of assembly, homodimer. Protochlorophyllide reductase is composed of three subunits; ChlL, ChlN and ChlB. The cofactor is [4Fe-4S] cluster.

It carries out the reaction chlorophyllide a + oxidized 2[4Fe-4S]-[ferredoxin] + 2 ADP + 2 phosphate = protochlorophyllide a + reduced 2[4Fe-4S]-[ferredoxin] + 2 ATP + 2 H2O. Its pathway is porphyrin-containing compound metabolism; chlorophyll biosynthesis (light-independent). In terms of biological role, component of the dark-operative protochlorophyllide reductase (DPOR) that uses Mg-ATP and reduced ferredoxin to reduce ring D of protochlorophyllide (Pchlide) to form chlorophyllide a (Chlide). This reaction is light-independent. The L component serves as a unique electron donor to the NB-component of the complex, and binds Mg-ATP. The polypeptide is Light-independent protochlorophyllide reductase iron-sulfur ATP-binding protein (Prochlorococcus marinus (strain NATL1A)).